Here is an 81-residue protein sequence, read N- to C-terminus: Sulfur carrier protein TusA (81 aa).

Residue C19 is the Cysteine persulfide intermediate of the active site.

It belongs to the sulfur carrier protein TusA family. As to quaternary structure, interacts with IscS.

It is found in the cytoplasm. Its pathway is tRNA modification. Its function is as follows. Sulfur carrier protein involved in sulfur trafficking in the cell. Part of a sulfur-relay system required for 2-thiolation during synthesis of 2-thiouridine of the modified wobble base 5-methylaminomethyl-2-thiouridine (mnm(5)s(2)U) in tRNA. Interacts with IscS and stimulates its cysteine desulfurase activity. Accepts an activated sulfur from IscS, which is then transferred to TusD, and thus determines the direction of sulfur flow from IscS to 2-thiouridine formation. Also appears to be involved in sulfur transfer for the biosynthesis of molybdopterin. This Erwinia tasmaniensis (strain DSM 17950 / CFBP 7177 / CIP 109463 / NCPPB 4357 / Et1/99) protein is Sulfur carrier protein TusA.